The sequence spans 121 residues: Large ribosomal subunit protein bL12 (121 aa).

Belongs to the bacterial ribosomal protein bL12 family. In terms of assembly, homodimer. Part of the ribosomal stalk of the 50S ribosomal subunit. Forms a multimeric L10(L12)X complex, where L10 forms an elongated spine to which 2 to 4 L12 dimers bind in a sequential fashion. Binds GTP-bound translation factors.

Functionally, forms part of the ribosomal stalk which helps the ribosome interact with GTP-bound translation factors. Is thus essential for accurate translation. The protein is Large ribosomal subunit protein bL12 of Alkaliphilus oremlandii (strain OhILAs) (Clostridium oremlandii (strain OhILAs)).